Consider the following 169-residue polypeptide: Der GTPase-activating protein YihI (169 aa).

2 disordered regions span residues 1–99 and 146–169; these read MKPS…QAEL and SYDD…LRGN. Residues 10-19 show a composition bias toward basic residues; sequence SKGHAKARRK. Basic and acidic residues predominate over residues 20 to 30; that stretch reads TREELDQEARD. Residues 31 to 40 show a composition bias toward basic residues; it reads RKRQKKRRGH. Residues 49–58 show a composition bias toward polar residues; that stretch reads GNTTSGSKGQ. Over residues 147–159 the composition is skewed to acidic residues; sequence YDDDEEEEEDEKQ. The span at 160–169 shows a compositional bias: basic and acidic residues; the sequence is EDMMRLLRGN.

The protein belongs to the YihI family. As to quaternary structure, interacts with Der.

Its function is as follows. A GTPase-activating protein (GAP) that modifies Der/EngA GTPase function. May play a role in ribosome biogenesis. This chain is Der GTPase-activating protein YihI, found in Escherichia coli O81 (strain ED1a).